A 374-amino-acid chain; its full sequence is Golgi-associated kinase 1B (374 aa).

Topologically, residues 1–38 (MSPDRTGRGSSSSSSSLKRLVCKSFVRAWGRRRPNLRR) are cytoplasmic. The chain crosses the membrane as a helical; Signal-anchor for type II membrane protein span at residues 39 to 61 (AVLLICTASAIYGIVIASQVLRG). Residues 62 to 374 (STHPGKALRK…LLQVYTRLDR (313 aa)) lie on the Extracellular side of the membrane. Residues 136 to 146 (VRPKKRRKYGA) show a composition bias toward basic residues. A disordered region spans residues 136–177 (VRPKKRRKYGARRPGVVQDTESKKDTLWSKVPNSQHKSQAQS). Positions 166–177 (VPNSQHKSQAQS) are enriched in polar residues. N-linked (GlcNAc...) asparagine glycosylation is found at asparagine 281 and asparagine 314.

Belongs to the GASK family.

It is found in the golgi apparatus membrane. This chain is Golgi-associated kinase 1B, found in Xenopus laevis (African clawed frog).